Consider the following 189-residue polypeptide: Alanine and glycine-rich protein (189 aa).

The span at A127–G160 shows a compositional bias: gly residues. The disordered stretch occupies residues A127–R170.

Component of the organic matrix of calcified shell layers like nacre and prisms.

The protein localises to the secreted. This is Alanine and glycine-rich protein from Mytilus californianus (California mussel).